A 275-amino-acid chain; its full sequence is NifU-like protein 5, mitochondrial (275 aa).

The transit peptide at 1 to 61 (MKGLTRLLNS…TNASRNCSRS (61 aa)) directs the protein to the mitochondrion.

The protein belongs to the NifU family.

The protein resides in the mitochondrion. Functionally, molecular scaffold for [Fe-S] cluster assembly of mitochondrial iron-sulfur proteins. This is NifU-like protein 5, mitochondrial (NIFU5) from Arabidopsis thaliana (Mouse-ear cress).